Consider the following 442-residue polypeptide: tRNA-2-methylthio-N(6)-dimethylallyladenosine synthase (442 aa).

Residues 2–117 (QGLYIKSYGC…LPELIIKARR (116 aa)) enclose the MTTase N-terminal domain. [4Fe-4S] cluster-binding residues include Cys11, Cys47, Cys80, Cys157, Cys161, and Cys164. The Radical SAM core domain maps to 143 to 374 (KNQEVSAFIS…QELLREQQLA (232 aa)). The TRAM domain occupies 377–442 (RNMIGQTCSV…QNSVTGIVVN (66 aa)).

The protein belongs to the methylthiotransferase family. MiaB subfamily. Monomer. [4Fe-4S] cluster is required as a cofactor.

The protein localises to the cytoplasm. It catalyses the reaction N(6)-dimethylallyladenosine(37) in tRNA + (sulfur carrier)-SH + AH2 + 2 S-adenosyl-L-methionine = 2-methylsulfanyl-N(6)-dimethylallyladenosine(37) in tRNA + (sulfur carrier)-H + 5'-deoxyadenosine + L-methionine + A + S-adenosyl-L-homocysteine + 2 H(+). Catalyzes the methylthiolation of N6-(dimethylallyl)adenosine (i(6)A), leading to the formation of 2-methylthio-N6-(dimethylallyl)adenosine (ms(2)i(6)A) at position 37 in tRNAs that read codons beginning with uridine. This chain is tRNA-2-methylthio-N(6)-dimethylallyladenosine synthase, found in Ehrlichia chaffeensis (strain ATCC CRL-10679 / Arkansas).